A 125-amino-acid polypeptide reads, in one-letter code: Large ribosomal subunit protein bL12 (125 aa).

It belongs to the bacterial ribosomal protein bL12 family. In terms of assembly, homodimer. Part of the ribosomal stalk of the 50S ribosomal subunit. Forms a multimeric L10(L12)X complex, where L10 forms an elongated spine to which 2 to 4 L12 dimers bind in a sequential fashion. Binds GTP-bound translation factors.

Functionally, forms part of the ribosomal stalk which helps the ribosome interact with GTP-bound translation factors. Is thus essential for accurate translation. The chain is Large ribosomal subunit protein bL12 from Rickettsia typhi (strain ATCC VR-144 / Wilmington).